Here is a 218-residue protein sequence, read N- to C-terminus: UPF0329 protein ECU10_1860 (218 aa).

The protein belongs to the UPF0329 family.

The polypeptide is UPF0329 protein ECU10_1860 (Encephalitozoon cuniculi (strain GB-M1) (Microsporidian parasite)).